Here is a 205-residue protein sequence, read N- to C-terminus: Glycerol-3-phosphate acyltransferase (205 aa).

At 1–3 (MSA) the chain is on the periplasmic side. Residues 4–24 (IAPGMILFAYLCGSISSAILV) traverse the membrane as a helical segment. Residues 25–52 (CRIAGLPDPRESGSGNPGATNVLRIGGK) are Cytoplasmic-facing. The chain crosses the membrane as a helical span at residues 53–73 (GAAVAVLIFDILKGMLPVWGA). Residues 74-80 (YALGITP) are Periplasmic-facing. The chain crosses the membrane as a helical span at residues 81–101 (FWLGLIAIAACLGHIWPVFFG). Topologically, residues 102-111 (FKGGKGVATA) are cytoplasmic. A helical membrane pass occupies residues 112–132 (FGAIAPIGWDLTGVIAGTWLL). Topologically, residues 133 to 137 (TVLLS) are periplasmic. The chain crosses the membrane as a helical span at residues 138-158 (GYSSLGAIVSALIAPFYVWWF). Topologically, residues 159 to 205 (KPQFTFPVSMLSCLILLRHHDNIQRLWRRQETKIWTKLKKKREKESK) are cytoplasmic.

The protein belongs to the PlsY family. As to quaternary structure, probably interacts with PlsX.

The protein localises to the cell inner membrane. The catalysed reaction is sn-glycerol 3-phosphate + an acyl-CoA = a 1-acyl-sn-glycero-3-phosphate + CoA. It carries out the reaction a fatty acyl-[ACP] + sn-glycerol 3-phosphate = a 1-acyl-sn-glycero-3-phosphate + holo-[ACP]. It functions in the pathway lipid metabolism; phospholipid metabolism. Catalyzes the transfer of an acyl group from acyl-ACP to glycerol-3-phosphate (G3P) to form lysophosphatidic acid (LPA). This enzyme can also utilize acyl-CoA as fatty acyl donor, but not acyl-PO(4). The protein is Glycerol-3-phosphate acyltransferase of Salmonella arizonae (strain ATCC BAA-731 / CDC346-86 / RSK2980).